Here is a 606-residue protein sequence, read N- to C-terminus: Armadillo repeat-containing X-linked protein 5 (606 aa).

Positions 1-85 (MIGSKTKRKA…KVKKKKDKTN (85 aa)) are disordered. Residues 15-26 (GASSKPGTNSPA) are compositionally biased toward polar residues. Residues 40 to 59 (VKAEPKEEWGNQAEARDEAV) show a composition bias toward basic and acidic residues. ARM repeat units follow at residues 349–388 (CKSR…GISP), 470–509 (VKFD…CLSK), 511–551 (QANT…NINF), and 568–606 (SELI…ILKL).

Belongs to the eutherian X-chromosome-specific Armcx family. As to expression, highly expressed in the developing neural tissues, neural crest derivatives and hind limbs.

The sequence is that of Armadillo repeat-containing X-linked protein 5 (Armcx5) from Mus musculus (Mouse).